The chain runs to 1141 residues: Translocase of chloroplast 125, chloroplastic (1141 aa).

Disordered stretches follow at residues 1–177 and 325–431; these read MDAL…ISGY and GFVE…EANE. Basic and acidic residues-rich tracts occupy residues 57–72 and 107–121; these read RVPE…KRDG and IDGR…REDL. Positions 132–150 are enriched in acidic residues; it reads YDDDDDDEEEEEDGSEEGE. A compositionally biased stretch (low complexity) spans 151-167; sequence STSSSIINSEYSSSASN. Acidic residues predominate over residues 328-353; it reads EAEEAESDVFTEGEDGYDDEDEDGDI. 2 stretches are compositionally biased toward low complexity: residues 389–401 and 408–429; these read RSSA…TTAT and TASS…SSEA. An AIG1-type G domain is found at 505 to 734; the sequence is DFACTILVLG…KLQEASTPGK (230 aa). The interval 514–521 is G1; sequence GKTGVGKS. Residue 517–522 participates in GTP binding; that stretch reads GVGKSA. A Mg(2+)-binding site is contributed by serine 521. Residues 541-545 are G2; the sequence is STTKV. A G3 region spans residues 561-564; sequence DTPG. Positions 633–636 are G4; the sequence is THAS. GTP contacts are provided by residues histidine 634 and 682–683; that span reads EN. Residues 682–684 form a G5 region; the sequence is ENH. 2 disordered regions span residues 758–795 and 832–871; these read QLKM…PFRP and IRRR…AVPM. Residues 770–789 are compositionally biased toward acidic residues; the sequence is EDSDDDSDEEDEEEGDEYDD. Over residues 832-841 the composition is skewed to basic residues; that stretch reads IRRRRERKKQ. Residues 1116–1136 form a helical membrane-spanning segment; it reads MVLIGIVPILRSLINCRFGFG.

Belongs to the TRAFAC class TrmE-Era-EngA-EngB-Septin-like GTPase superfamily. AIG1/Toc34/Toc159-like paraseptin GTPase family. TOC159 subfamily. Part of the TOC core complex. Mg(2+) serves as cofactor.

Its subcellular location is the plastid. The protein resides in the chloroplast outer membrane. Its function is as follows. GTPase involved in protein precursor import into chloroplasts. Seems to recognize chloroplast-destined precursor proteins and regulate their presentation to the translocation channel through GTP hydrolysis. Probably specialized in the import of nuclear encoded non-photosynthetic preproteins from the cytoplasm to the chloroplast. This Physcomitrium patens (Spreading-leaved earth moss) protein is Translocase of chloroplast 125, chloroplastic.